The primary structure comprises 838 residues: Urease (838 aa).

The Urease domain occupies 402–838 (GGFDTHIHFI…LPLTQDYFVY (437 aa)). Positions 407, 409, and 490 each coordinate Ni(2+). Lysine 490 carries the N6-carboxylysine modification. Histidine 492 is a substrate binding site. Ni(2+) is bound by residues histidine 519 and histidine 545. Histidine 593 acts as the Proton donor in catalysis. A Ni(2+)-binding site is contributed by aspartate 633.

The protein in the C-terminal section; belongs to the metallo-dependent hydrolases superfamily. Urease alpha subunit family. As to quaternary structure, homohexamer. Requires Ni cation as cofactor. Carboxylation allows a single lysine to coordinate two nickel ions.

The enzyme catalyses urea + 2 H2O + H(+) = hydrogencarbonate + 2 NH4(+). It functions in the pathway nitrogen metabolism; urea degradation; CO(2) and NH(3) from urea (urease route): step 1/1. The protein is Urease (ure1) of Aspergillus fumigatus (strain ATCC MYA-4609 / CBS 101355 / FGSC A1100 / Af293) (Neosartorya fumigata).